A 459-amino-acid chain; its full sequence is Glutamate--tRNA ligase 1 (459 aa).

Residues 8 to 18 (PSPTGYIHIGN) carry the 'HIGH' region motif. Positions 249–253 (GLSKR) match the 'KMSKS' region motif. Residue Lys252 participates in ATP binding.

This sequence belongs to the class-I aminoacyl-tRNA synthetase family. Glutamate--tRNA ligase type 1 subfamily. As to quaternary structure, monomer.

Its subcellular location is the cytoplasm. The catalysed reaction is tRNA(Glu) + L-glutamate + ATP = L-glutamyl-tRNA(Glu) + AMP + diphosphate. In terms of biological role, catalyzes the attachment of glutamate to tRNA(Glu) in a two-step reaction: glutamate is first activated by ATP to form Glu-AMP and then transferred to the acceptor end of tRNA(Glu). The chain is Glutamate--tRNA ligase 1 from Bartonella quintana (strain Toulouse) (Rochalimaea quintana).